The primary structure comprises 501 residues: Probable cytosol aminopeptidase (501 aa).

Lys257 and Asp262 together coordinate Mn(2+). Lys269 is a catalytic residue. Residues Asp281, Asp341, and Glu343 each contribute to the Mn(2+) site. Arg345 is a catalytic residue.

It belongs to the peptidase M17 family. Requires Mn(2+) as cofactor.

It localises to the cytoplasm. It catalyses the reaction Release of an N-terminal amino acid, Xaa-|-Yaa-, in which Xaa is preferably Leu, but may be other amino acids including Pro although not Arg or Lys, and Yaa may be Pro. Amino acid amides and methyl esters are also readily hydrolyzed, but rates on arylamides are exceedingly low.. The catalysed reaction is Release of an N-terminal amino acid, preferentially leucine, but not glutamic or aspartic acids.. Its function is as follows. Presumably involved in the processing and regular turnover of intracellular proteins. Catalyzes the removal of unsubstituted N-terminal amino acids from various peptides. The protein is Probable cytosol aminopeptidase of Synechococcus sp. (strain RCC307).